The primary structure comprises 357 residues: Membrane-bound lytic murein transglycosylase C (357 aa).

The first 15 residues, 1 to 15 (MKKYLLLALLPFLYA), serve as a signal peptide directing secretion. Cysteine 16 is lipidated: N-palmitoyl cysteine. The S-diacylglycerol cysteine moiety is linked to residue cysteine 16.

This sequence belongs to the transglycosylase Slt family.

It localises to the cell outer membrane. The enzyme catalyses Exolytic cleavage of the (1-&gt;4)-beta-glycosidic linkage between N-acetylmuramic acid (MurNAc) and N-acetylglucosamine (GlcNAc) residues in peptidoglycan, from either the reducing or the non-reducing ends of the peptidoglycan chains, with concomitant formation of a 1,6-anhydrobond in the MurNAc residue.. In terms of biological role, murein-degrading enzyme. May play a role in recycling of muropeptides during cell elongation and/or cell division. This chain is Membrane-bound lytic murein transglycosylase C, found in Haemophilus influenzae (strain PittGG).